We begin with the raw amino-acid sequence, 151 residues long: UPF0178 protein mma_0312 (151 aa).

Belongs to the UPF0178 family.

The polypeptide is UPF0178 protein mma_0312 (Janthinobacterium sp. (strain Marseille) (Minibacterium massiliensis)).